Consider the following 371-residue polypeptide: Putative glutamate--cysteine ligase 2 (371 aa).

This sequence belongs to the glutamate--cysteine ligase type 2 family. YbdK subfamily. In terms of assembly, homodimer.

The enzyme catalyses L-cysteine + L-glutamate + ATP = gamma-L-glutamyl-L-cysteine + ADP + phosphate + H(+). Its function is as follows. ATP-dependent carboxylate-amine ligase which exhibits weak glutamate--cysteine ligase activity. This is Putative glutamate--cysteine ligase 2 from Klebsiella pneumoniae (strain 342).